The sequence spans 89 residues: Small ribosomal subunit protein uS17 (89 aa).

This sequence belongs to the universal ribosomal protein uS17 family. In terms of assembly, part of the 30S ribosomal subunit.

One of the primary rRNA binding proteins, it binds specifically to the 5'-end of 16S ribosomal RNA. The protein is Small ribosomal subunit protein uS17 of Variovorax paradoxus (strain S110).